Here is a 426-residue protein sequence, read N- to C-terminus: Anhydromevalonate phosphate decarboxylase (426 aa).

Mn(2+) contacts are provided by Asn148 and Glu211. Asp255 functions as the Proton acceptor in the catalytic mechanism.

The protein belongs to the UbiD family. Prenylated FMN serves as cofactor. It depends on Mn(2+) as a cofactor.

It carries out the reaction (2E)-3-methyl-5-phosphooxypent-2-enoate + H(+) = isopentenyl phosphate + CO2. It functions in the pathway isoprenoid biosynthesis; isopentenyl diphosphate biosynthesis via mevalonate pathway. Functionally, catalyzes the conversion of trans-anhydromevalonate 5-phosphate (tAHMP) into isopentenyl phosphate. Involved in the archaeal mevalonate (MVA) pathway, which provides fundamental precursors for isoprenoid biosynthesis, such as isopentenyl diphosphate (IPP) and dimethylallyl diphosphate (DMAPP). In Archaeoglobus fulgidus (strain ATCC 49558 / DSM 4304 / JCM 9628 / NBRC 100126 / VC-16), this protein is Anhydromevalonate phosphate decarboxylase.